A 299-amino-acid chain; its full sequence is Non-homologous end-joining factor 1 (299 aa).

Residues 1–135 (MEELEQGLLM…ASPSLVSQHL (135 aa)) are globular head. Positions 128-170 (PSLVSQHLIRPLMGMSLALQCQVRELATLLHMKDLEIQDYQES) form a coiled coil. Phosphoserine; by PRKDC occurs at positions 132, 203, 245, and 251. Positions 224-288 (QEVQVGQKHQ…GPLQRPQLSK (65 aa)) are C-terminal tail. The segment covering 255–266 (NQPEQLVSSAPT) has biased composition (polar residues). The tract at residues 255-299 (NQPEQLVSSAPTLSAPEKESTGTSGPLQRPQLSKVKRKKPRGLFS) is disordered. S263 carries the phosphoserine modification. T266 carries the post-translational modification Phosphothreonine. S287 bears the Phosphoserine mark. The segment covering 288–299 (KVKRKKPRGLFS) has biased composition (basic residues). Residues 289-299 (VKRKKPRGLFS) carry the XLM motif.

This sequence belongs to the XRCC4-XLF family. XLF subfamily. As to quaternary structure, homodimer; mainly exists as a homodimer when not associated with XRCC4. Interacts with XRCC4; the interaction is direct and is mediated via a head-to-head interaction between N-terminal head regions. Component of the core long-range non-homologous end joining (NHEJ) complex (also named DNA-PK complex) composed of PRKDC, LIG4, XRCC4, XRCC6/Ku70, XRCC5/Ku86 and NHEJ1/XLF. Additional component of the NHEJ complex includes PAXX. Following autophosphorylation, PRKDC dissociates from DNA, leading to formation of the short-range NHEJ complex, composed of LIG4, XRCC4, XRCC6/Ku70, XRCC5/Ku86 and NHEJ1/XLF. Interacts with POLL (DNA polymerase lambda); promoting POLL recruitment to double-strand breaks (DSBs) and stimulation of the end-filling activity of POLL. In terms of processing, phosphorylated by PRKDC at the C-terminus in response to DNA damage. Phosphorylations by PRKDC at the C-terminus of XRCC4 and NHEJ1/XLF are highly redundant and regulate ability of the XRCC4-NHEJ1/XLF subcomplex to bridge DNA. Phosphorylation does not prevent interaction with XRCC4 but disrupts ability to bridge DNA and promotes detachment from DNA. In terms of tissue distribution, ubiquitously expressed.

Its subcellular location is the nucleus. It is found in the chromosome. DNA repair protein involved in DNA non-homologous end joining (NHEJ); it is required for double-strand break (DSB) repair and V(D)J recombination and is also involved in telomere maintenance. Plays a key role in NHEJ by promoting the ligation of various mismatched and non-cohesive ends. Together with PAXX, collaborates with DNA polymerase lambda (POLL) to promote joining of non-cohesive DNA ends. May act in concert with XRCC5-XRCC6 (Ku) to stimulate XRCC4-mediated joining of blunt ends and several types of mismatched ends that are non-complementary or partially complementary. In some studies, has been shown to associate with XRCC4 to form alternating helical filaments that bridge DNA and act like a bandage, holding together the broken DNA until it is repaired. Alternatively, it has also been shown that rather than forming filaments, a single NHEJ1 dimer interacts through both head domains with XRCC4 to promote the close alignment of DNA ends. The XRCC4-NHEJ1/XLF subcomplex binds to the DNA fragments of a DSB in a highly diffusive manner and robustly bridges two independent DNA molecules, holding the broken DNA fragments in close proximity to one other. The mobility of the bridges ensures that the ends remain accessible for further processing by other repair factors. Binds DNA in a length-dependent manner. The polypeptide is Non-homologous end-joining factor 1 (Homo sapiens (Human)).